A 241-amino-acid polypeptide reads, in one-letter code: Nuclear receptor-interacting protein 3 (241 aa).

The polypeptide is Nuclear receptor-interacting protein 3 (NRIP3) (Homo sapiens (Human)).